The sequence spans 70 residues: uncharacterized protein (70 aa).

This is an uncharacterized protein from Saccharomyces cerevisiae (strain ATCC 204508 / S288c) (Baker's yeast).